The sequence spans 360 residues: Chorismate synthase (360 aa).

NADP(+)-binding residues include R48 and R54. FMN contacts are provided by residues R125–S127, N246–A247, G286, K301–S305, and R327.

The protein belongs to the chorismate synthase family. As to quaternary structure, homotetramer. Requires FMNH2 as cofactor.

It catalyses the reaction 5-O-(1-carboxyvinyl)-3-phosphoshikimate = chorismate + phosphate. The protein operates within metabolic intermediate biosynthesis; chorismate biosynthesis; chorismate from D-erythrose 4-phosphate and phosphoenolpyruvate: step 7/7. In terms of biological role, catalyzes the anti-1,4-elimination of the C-3 phosphate and the C-6 proR hydrogen from 5-enolpyruvylshikimate-3-phosphate (EPSP) to yield chorismate, which is the branch point compound that serves as the starting substrate for the three terminal pathways of aromatic amino acid biosynthesis. This reaction introduces a second double bond into the aromatic ring system. This chain is Chorismate synthase, found in Glaesserella parasuis serovar 5 (strain SH0165) (Haemophilus parasuis).